The chain runs to 411 residues: Peptidase T (411 aa).

His78 is a binding site for Zn(2+). Asp80 is a catalytic residue. Position 140 (Asp140) interacts with Zn(2+). Glu173 functions as the Proton acceptor in the catalytic mechanism. 3 residues coordinate Zn(2+): Glu174, Asp196, and His379.

This sequence belongs to the peptidase M20B family. Requires Zn(2+) as cofactor.

The protein localises to the cytoplasm. The catalysed reaction is Release of the N-terminal residue from a tripeptide.. Its function is as follows. Cleaves the N-terminal amino acid of tripeptides. In Yersinia pestis bv. Antiqua (strain Antiqua), this protein is Peptidase T.